Here is a 95-residue protein sequence, read N- to C-terminus: Small ubiquitin-related modifier 2-B (95 aa).

Lysine 11 participates in a covalent cross-link: Glycyl lysine isopeptide (Lys-Gly) (interchain with G-Cter in SUMO). The Ubiquitin-like domain occupies 16-95; sequence DHINLKVAGQ…VFQQQTGGSY (80 aa). A Glycyl lysine isopeptide (Gly-Lys) (interchain with K-? in acceptor proteins) cross-link involves residue glycine 93. The propeptide occupies 94 to 95; it reads SY.

This sequence belongs to the ubiquitin family. SUMO subfamily. Interacts with sae2 and ube2i. Covalently attached to a number of proteins, including top2. In terms of processing, polymeric chains can be formed through Lys-11 cross-linking. Post-translationally, cleavage of precursor form by a sentrin-specific protease is necessary for function.

The protein localises to the nucleus. In terms of biological role, ubiquitin-like protein that can be covalently attached to proteins as a monomer or as a lysine-linked polymer. Covalent attachment via an isopeptide bond to its substrates requires prior activation by the E1 complex sae1-sae2 and linkage to the E2 enzyme ube2i, and can be promoted by an E3 ligase such as pias1-4. This post-translational modification on lysine residues of proteins plays a crucial role in a number of cellular processes such as nuclear transport, DNA replication and repair, mitosis and signal transduction. Polymeric sumo2 chains are also susceptible to polyubiquitination which functions as a signal for proteasomal degradation of modified proteins. The polypeptide is Small ubiquitin-related modifier 2-B (sumo2-b) (Xenopus laevis (African clawed frog)).